The sequence spans 412 residues: Poly-beta-1,6-N-acetyl-D-glucosamine synthase (412 aa).

4 helical membrane passes run 7–28, 298–320, 332–354, and 364–386; these read LLFY…YFFI, IASI…TANI, IFFF…ALFI, and VGLI…VVIM.

The protein belongs to the glycosyltransferase 2 family.

The protein localises to the cell membrane. Its function is as follows. N-acetylglucosaminyltransferase that catalyzes the polymerization of single monomer units of UDP-N-acetylglucosamine to produce the linear homomer poly-beta-1,6-N-acetyl-D-glucosamine (PNAG, also referred to as PIA), a biofilm adhesin polysaccharide. Requires IcaD for full activity. In Staphylococcus epidermidis, this protein is Poly-beta-1,6-N-acetyl-D-glucosamine synthase (icaA).